Reading from the N-terminus, the 1052-residue chain is Calmin (1052 aa).

An actin-binding region spans residues 1 to 288 (MAAQEWDWFQ…IVTYVAQFLE (288 aa)). The 108-residue stretch at 32–139 (NVQKRTFTRW…LIWNIILFFQ (108 aa)) folds into the Calponin-homology (CH) 1 domain. Over residues 148 to 168 (SRSSPSSSLSPGSGGTDSDSS) the composition is skewed to low complexity. The tract at residues 148 to 178 (SRSSPSSSLSPGSGGTDSDSSYPPTPTTERS) is disordered. The 105-residue stretch at 187 to 291 (RKAIKTLLSW…YVAQFLERFP (105 aa)) folds into the Calponin-homology (CH) 2 domain. Disordered regions lie at residues 391 to 420 (STGKTGSIAEPTPESSILSTRKDGRRSNSL), 455 to 545 (KATK…TLLA), 585 to 727 (STSQ…SPPL), and 758 to 929 (GEDL…DSSI). Composition is skewed to basic and acidic residues over residues 455–465 (KATKELSKQDG) and 472–495 (VSKEKKKSEQEARLVLEAASDKVP). Positions 509-529 (AQPSQDSSFCNGTVESPSSQG) are enriched in polar residues. Residue serine 537 is modified to Phosphoserine. Basic and acidic residues-rich tracts occupy residues 594-614 (PSSHEKTRGEEEGSENHAEKP), 622-651 (PRAETEAAESRLEPKKLEPPPKDPEQEDQG), and 659-669 (PADKKPKVYEK). Phosphoserine is present on serine 679. Phosphothreonine is present on threonine 710. A compositionally biased stretch (basic and acidic residues) spans 711 to 720 (LRSHSEEGLD). A Phosphoserine modification is found at serine 724. The span at 759–773 (EDLKSEDTDLEHPED) shows a compositional bias: basic and acidic residues. Residues 780–791 (REEEADEDEEEA) are compositionally biased toward acidic residues. Over residues 792-801 (QSSQSSCSFS) the composition is skewed to low complexity. The segment covering 836 to 849 (SHEDHQPKETKENG) has biased composition (basic and acidic residues). A Phosphoserine modification is found at serine 856. A compositionally biased stretch (basic residues) spans 880–889 (SKKKEKRKHM). At serine 925 the chain carries Phosphoserine. Residues 1027–1047 (VIYFILFLWLLVYCLLLFPQL) form a helical; Anchor for type IV membrane protein membrane-spanning segment.

As to expression, expressed in testis. Expressed during testis maturation process and in maturing spermatids. In brain, it is expressed in neurons of the hippocampus, cerebral cortex, and thalamus, Purkinje cells, and also in the choroid plexus and ependymal cells. Expressed predominantly in dendrites and cell bodies of the neurons, but not in axons. The level of expression increases during the period of maturation of the mouse brain after birth.

Its subcellular location is the membrane. It is found in the cytoplasm. In Mus musculus (Mouse), this protein is Calmin (Clmn).